Consider the following 78-residue polypeptide: NAD(P)H-quinone oxidoreductase subunit L (78 aa).

A run of 2 helical transmembrane segments spans residues 10 to 30 (LFVIGTYLFLGTLYLVFIPLG) and 48 to 68 (LLIYSLVFLFFPGLILFAPFL).

The protein belongs to the complex I NdhL subunit family. As to quaternary structure, NDH-1 can be composed of about 15 different subunits; different subcomplexes with different compositions have been identified which probably have different functions.

Its subcellular location is the cellular thylakoid membrane. It catalyses the reaction a plastoquinone + NADH + (n+1) H(+)(in) = a plastoquinol + NAD(+) + n H(+)(out). It carries out the reaction a plastoquinone + NADPH + (n+1) H(+)(in) = a plastoquinol + NADP(+) + n H(+)(out). In terms of biological role, NDH-1 shuttles electrons from an unknown electron donor, via FMN and iron-sulfur (Fe-S) centers, to quinones in the respiratory and/or the photosynthetic chain. The immediate electron acceptor for the enzyme in this species is believed to be plastoquinone. Couples the redox reaction to proton translocation, and thus conserves the redox energy in a proton gradient. Cyanobacterial NDH-1 also plays a role in inorganic carbon-concentration. The protein is NAD(P)H-quinone oxidoreductase subunit L of Prochlorococcus marinus (strain SARG / CCMP1375 / SS120).